The following is a 126-amino-acid chain: Putative lipoprotein LprD (126 aa).

Positions 1 to 19 (MSTTRRRRPALVALVTIAA) are cleaved as a signal peptide. C20 carries N-palmitoyl cysteine lipidation. Residue C20 is the site of S-diacylglycerol cysteine attachment. Residues 44-64 (GYALQWPLFAGFCLYTYHNFV) traverse the membrane as a helical segment.

To M.tuberculosis Rv1343c.

The protein resides in the cell membrane. This chain is Putative lipoprotein LprD (lprD), found in Mycobacterium leprae (strain TN).